The primary structure comprises 673 residues: DNA ligase (673 aa).

NAD(+)-binding positions include 36–40 (DSEYD), 85–86 (SL), and Glu118. The active-site N6-AMP-lysine intermediate is Lys120. NAD(+) contacts are provided by Arg141, Glu178, Lys295, and Lys319. Positions 413, 416, 431, and 437 each coordinate Zn(2+). In terms of domain architecture, BRCT spans 596 to 673 (VRDNPLKGKT…SENEFLALLA (78 aa)).

It belongs to the NAD-dependent DNA ligase family. LigA subfamily. Mg(2+) serves as cofactor. Mn(2+) is required as a cofactor.

It carries out the reaction NAD(+) + (deoxyribonucleotide)n-3'-hydroxyl + 5'-phospho-(deoxyribonucleotide)m = (deoxyribonucleotide)n+m + AMP + beta-nicotinamide D-nucleotide.. In terms of biological role, DNA ligase that catalyzes the formation of phosphodiester linkages between 5'-phosphoryl and 3'-hydroxyl groups in double-stranded DNA using NAD as a coenzyme and as the energy source for the reaction. It is essential for DNA replication and repair of damaged DNA. The polypeptide is DNA ligase (Histophilus somni (strain 129Pt) (Haemophilus somnus)).